The primary structure comprises 67 residues: Large ribosomal subunit protein eL24 (67 aa).

Residues Cys-7, Cys-10, Cys-33, and Cys-37 each contribute to the Zn(2+) site. The C4-type zinc-finger motif lies at 7 to 37 (CDYCGTDIEPGTGTMFVHKDGATTHFCSSKC). A compositionally biased stretch (basic and acidic residues) spans 48–60 (RNLEWTDTARGEA). The disordered stretch occupies residues 48-67 (RNLEWTDTARGEAGEAEDEA).

The protein belongs to the eukaryotic ribosomal protein eL24 family. Part of the 50S ribosomal subunit. Forms a cluster with proteins L3 and L14. Requires Zn(2+) as cofactor.

In terms of biological role, binds to the 23S rRNA. In Haloarcula marismortui (strain ATCC 43049 / DSM 3752 / JCM 8966 / VKM B-1809) (Halobacterium marismortui), this protein is Large ribosomal subunit protein eL24 (rpl24e).